The sequence spans 279 residues: MFRNQYDSDVTVWSPQGRLHQVEYAMEAVKLGTATVGLKNKDYAVLVALCKPTSELSDTQRKIIPIDDHLGISIAGLTADARVLSRYLRSECLNYKHSYDTTYPVSRLITNLGNKMQTTTQRYDRRPYGVGLLVAGYDERGPHIYQVTPSATFFNCKANSIGSRSQSARTYLEKNLNKFLDSSKDEIIRHGIRAILGTLPTDEQGKDAGQYDITVAIVGKDQPFTILSNKDSAKHVAIAKENDNDTPRNDDDDDRPSPPEEPAAGPRDPEVLVATEQRP.

Tyrosine 103 is modified (phosphotyrosine). The span at 235 to 249 (HVAIAKENDNDTPRN) shows a compositional bias: basic and acidic residues. The disordered stretch occupies residues 235-279 (HVAIAKENDNDTPRNDDDDDRPSPPEEPAAGPRDPEVLVATEQRP).

This sequence belongs to the peptidase T1A family. As to quaternary structure, the 26S proteasome consists of a 20S proteasome core and two 19S regulatory subunits. The 20S proteasome core is composed of 28 subunits that are arranged in four stacked rings, resulting in a barrel-shaped structure. The two end rings are each formed by seven alpha subunits, and the two central rings are each formed by seven beta subunits. The catalytic chamber with the active sites is on the inside of the barrel. Interacts with PI31.

The protein localises to the cytoplasm. Its subcellular location is the nucleus. In terms of biological role, the proteasome is a multicatalytic proteinase complex which is characterized by its ability to cleave peptides with Arg, Phe, Tyr, Leu, and Glu adjacent to the leaving group at neutral or slightly basic pH. The proteasome has an ATP-dependent proteolytic activity. This chain is Proteasome subunit alpha type-1 (Prosalpha6), found in Drosophila melanogaster (Fruit fly).